A 307-amino-acid polypeptide reads, in one-letter code: Alginate lyase (307 aa).

Positions 1–20 (MLKSGVMVASLCLFSVPSRA) are cleaved as a signal peptide.

This sequence belongs to the polysaccharide lyase 7 family.

Its subcellular location is the secreted. It catalyses the reaction Eliminative cleavage of alginate to give oligosaccharides with 4-deoxy-alpha-L-erythro-hex-4-enuronosyl groups at their non-reducing ends and beta-D-mannuronate at their reducing end.. Degrades alginates that contain guluronic acid. The protein is Alginate lyase (alyA) of Klebsiella pneumoniae.